We begin with the raw amino-acid sequence, 356 residues long: Sulfate/thiosulfate import ATP-binding protein CysA (356 aa).

One can recognise an ABC transporter domain in the interval 3 to 237 (IEVKNLVKRF…PKNSFVFHFL (235 aa)). Position 35–42 (35–42 (GPSGSGKT)) interacts with ATP.

This sequence belongs to the ABC transporter superfamily. Sulfate/tungstate importer (TC 3.A.1.6) family. The complex is composed of two ATP-binding proteins (CysA), two transmembrane proteins (CysT and CysW) and a solute-binding protein (CysP).

Its subcellular location is the cell inner membrane. The enzyme catalyses sulfate(out) + ATP + H2O = sulfate(in) + ADP + phosphate + H(+). The catalysed reaction is thiosulfate(out) + ATP + H2O = thiosulfate(in) + ADP + phosphate + H(+). Functionally, part of the ABC transporter complex CysAWTP involved in sulfate/thiosulfate import. Responsible for energy coupling to the transport system. In Leptospira interrogans serogroup Icterohaemorrhagiae serovar copenhageni (strain Fiocruz L1-130), this protein is Sulfate/thiosulfate import ATP-binding protein CysA.